The chain runs to 352 residues: Divinyl chlorophyll a/b light-harvesting protein PcbA (352 aa).

Transmembrane regions (helical) follow at residues 27-47 (FIAA…AFTL), 90-110 (VLAI…GGLL), 142-162 (FILG…VEWA), 203-223 (VMGG…WHIA), 243-263 (AVLS…AFWS), and 306-326 (LANV…WHAL).

The protein belongs to the PsbB/PsbC family. IsiA/Pcb subfamily. As to quaternary structure, the antenna complex consists of divinyl chlorophylls (a and b) and divinyl chlorophyll a/b binding proteins and binds less divinyl chlorophyll b than does low-light-adapted Prochlorococcus. Also forms complexes with PSII, consisting of a PSII dimer and 4 or 8 PcbA subunits. These complexes are also found under conditions of iron-starvation. Divinyl chlorophyll a serves as cofactor. The cofactor is divinyl chlorophyll b.

It is found in the cellular thylakoid membrane. The antenna complex functions as a light receptor, it captures and delivers excitation energy to photosystem II and possibly to photosystem I. The Prochlorales pcb genes are not related to higher plant LHCs. This chain is Divinyl chlorophyll a/b light-harvesting protein PcbA (pcbA), found in Prochlorococcus marinus subsp. pastoris (strain CCMP1986 / NIES-2087 / MED4).